The following is a 57-amino-acid chain: Potassium channel toxin alpha-KTx 8.2 (57 aa).

Residues 1–28 form the signal peptide; it reads MSRLYAIILIALVFNVVMTITPDMKVEA. Intrachain disulfides connect C31–C47, C34–C52, and C38–C54.

The protein belongs to the short scorpion toxin superfamily. Potassium channel inhibitor family. Alpha-KTx 08 subfamily. Expressed by the venom gland.

It is found in the secreted. In terms of biological role, this toxin inhibits rKv1.1/KCNA1 (100% inhibition at 3 uM), Kv1.3/KCNA3 (human, mouse and rat) (IC(50)=269-467 nM), shaker IR (60% at 3 uM) and activates the mouse capsaicin receptor TRPV1 (EC(50)=132 uM, at 20 degrees Celsius), a non-selective cation channel expressed by sensory neurons of the pain pathway. In vivo, intraplantar injection of this toxin in WT mice hind paw shows significant acute pain, whereas no pain is observed when the toxin is injected into TRPV1 KO mice. In addition, subcutaneous injection into mice (185 mg) produces an excitation of the animal, but no lethality, whereas injection into cockroaches does not provoke lethality as well. The sequence is that of Potassium channel toxin alpha-KTx 8.2 from Olivierus martensii (Manchurian scorpion).